The primary structure comprises 291 residues: Phosphatidylglycerol--prolipoprotein diacylglyceryl transferase (291 aa).

Helical transmembrane passes span 24–44, 64–84, 99–119, and 125–145; these read WYALAYIGGIMLGWLYARALL, FILWVTIGIILGGRTGYVLFY, IWKGGMSFHGGFMGCVVAVIL, and GLPILSLGDVATAVGPIGLFL. Residue Arg147 coordinates a 1,2-diacyl-sn-glycero-3-phospho-(1'-sn-glycerol). Helical transmembrane passes span 187–207, 211–231, and 247–267; these read ATLEGLVLFTILALMIRAGAL, GLVLGSFITLYAMARIAGEFF, and MGMLLSAPMIIAGLAIICVAW.

Belongs to the Lgt family.

It is found in the cell inner membrane. The catalysed reaction is L-cysteinyl-[prolipoprotein] + a 1,2-diacyl-sn-glycero-3-phospho-(1'-sn-glycerol) = an S-1,2-diacyl-sn-glyceryl-L-cysteinyl-[prolipoprotein] + sn-glycerol 1-phosphate + H(+). The protein operates within protein modification; lipoprotein biosynthesis (diacylglyceryl transfer). In terms of biological role, catalyzes the transfer of the diacylglyceryl group from phosphatidylglycerol to the sulfhydryl group of the N-terminal cysteine of a prolipoprotein, the first step in the formation of mature lipoproteins. This is Phosphatidylglycerol--prolipoprotein diacylglyceryl transferase from Nitrobacter hamburgensis (strain DSM 10229 / NCIMB 13809 / X14).